Consider the following 393-residue polypeptide: Methylthioribose kinase (393 aa).

ATP is bound by residues Asn38, Lys53, and 107–109; that span reads EDL. Asp225 contributes to the substrate binding site. 242 to 244 contributes to the ATP binding site; the sequence is DPE. Residue Arg332 participates in substrate binding.

The protein belongs to the methylthioribose kinase family. Homodimer.

The enzyme catalyses 5-(methylsulfanyl)-D-ribose + ATP = 5-(methylsulfanyl)-alpha-D-ribose 1-phosphate + ADP + H(+). The protein operates within amino-acid biosynthesis; L-methionine biosynthesis via salvage pathway; S-methyl-5-thio-alpha-D-ribose 1-phosphate from S-methyl-5'-thioadenosine (hydrolase route): step 2/2. Its function is as follows. Catalyzes the phosphorylation of methylthioribose into methylthioribose-1-phosphate. The protein is Methylthioribose kinase of Bacillus cereus (strain 03BB102).